We begin with the raw amino-acid sequence, 466 residues long: Vimentin (466 aa).

Composition is skewed to low complexity over residues M1 to R13 and T20 to T33. The tract at residues M1 to T33 is disordered. N-acetylserine is present on S2. The segment at S2–E95 is head. S5 bears the Phosphoserine mark. Residue S7 is modified to Phosphoserine; by PKA and PKC; alternate. The O-linked (GlcNAc) serine; alternate glycan is linked to S7. S8 carries the phosphoserine modification. Phosphoserine; by PKC is present on residues S9 and S10. T20 carries the post-translational modification Phosphothreonine. The residue at position 21 (S21) is a Phosphoserine; by PKC. The residue at position 25 (S25) is a Phosphoserine; by PKA and PKC. Residue S26 is modified to Phosphoserine; by PKC. T33 carries O-linked (GlcNAc) threonine glycosylation. Residue S34 is glycosylated (O-linked (GlcNAc) serine; alternate). Residue S34 is modified to Phosphoserine; by PKC; alternate. S39 carries the post-translational modification Phosphoserine; by CaMK2, PKA, PKC and ROCK2. Phosphoserine; by PKC is present on S42. Position 47 is a phosphoserine; by PKA (S47). S49 bears the Phosphoserine mark. A Phosphoserine; by PKA and PKC modification is found at S51. Y53 carries the phosphotyrosine modification. S55 and S56 each carry phosphoserine. At Y61 the chain carries Phosphotyrosine. S66 carries the phosphoserine; by PKA and PKC modification. The residue at position 72 (S72) is a Phosphoserine; by AURKB and ROCK2. Phosphoserine is present on S73. S83 bears the Phosphoserine; by CaMK2 mark. S87 carries the post-translational modification Phosphoserine. The interval F96–L131 is coil 1A. The stretch at F96–L131 forms a coiled coil. Residues E103–I411 form the IF rod domain. Residue K104 forms a Glycyl lysine isopeptide (Lys-Gly) (interchain with G-Cter in SUMO2) linkage. Phosphotyrosine is present on Y117. N6-acetyllysine; alternate occurs at positions 120, 129, and 139. K120 and K129 each carry N6-succinyllysine; alternate. Residues K120, K129, and K139 each participate in a glycyl lysine isopeptide (Lys-Gly) (interchain with G-Cter in SUMO2); alternate cross-link. A linker 1 region spans residues L132–E153. S144 is modified (phosphoserine). A coiled-coil region spans residues M154–L245. The segment at M154–L245 is coil 1B. K168 bears the N6-acetyllysine mark. Position 188 is an N6-acetyllysine; alternate (K188). K188 bears the N6-succinyllysine; alternate mark. A Phosphoserine modification is found at S214. The residue at position 223 (K223) is an N6-acetyllysine; alternate. A Glycyl lysine isopeptide (Lys-Gly) (interchain with G-Cter in SUMO2); alternate cross-link involves residue K223. S226 bears the Phosphoserine mark. N6-acetyllysine is present on K235. The interval Q246–A268 is linker 12. K262 is covalently cross-linked (Glycyl lysine isopeptide (Lys-Gly) (interchain with G-Cter in SUMO2)). The interval L269–E407 is coil 2. K294 carries the post-translational modification N6-acetyllysine; alternate. Position 294 is an N6-succinyllysine; alternate (K294). A Glycyl lysine isopeptide (Lys-Gly) (interchain with G-Cter in SUMO2); alternate cross-link involves residue K294. S299 is subject to Phosphoserine. The stretch at N303–E407 forms a coiled coil. Residue K313 forms a Glycyl lysine isopeptide (Lys-Gly) (interchain with G-Cter in SUMO2) linkage. S325 carries the post-translational modification Phosphoserine. The short motif at L326 to E329 is the [IL]-x-C-x-x-[DE] motif element. K373 is subject to N6-acetyllysine; alternate. A Glycyl lysine isopeptide (Lys-Gly) (interchain with G-Cter in SUMO2); alternate cross-link involves residue K373. The segment at E408–E466 is tail. 4 positions are modified to phosphoserine: S409, S412, S419, and S420. T426 carries the phosphothreonine modification. S430 bears the Phosphoserine mark. T436 carries the phosphothreonine modification. Phosphoserine is present on S438. K439 participates in a covalent cross-link: Glycyl lysine isopeptide (Lys-Gly) (interchain with G-Cter in SUMO2). At K445 the chain carries N6-acetyllysine; alternate. K445 carries the N6-succinyllysine; alternate modification. K445 is covalently cross-linked (Glycyl lysine isopeptide (Lys-Gly) (interchain with G-Cter in SUMO2); alternate). A Glycyl lysine isopeptide (Lys-Gly) (interchain with G-Cter in SUMO1); alternate cross-link involves residue K445. Residues T446 and T458 each carry the phosphothreonine modification. S459 bears the Phosphoserine mark.

The protein belongs to the intermediate filament family. In terms of assembly, homomer assembled from elementary dimers. Identified in complexes that contain VIM, EZR, AHNAK, BFSP1, BFSP2, ANK2, PLEC, PRX and spectrin. Interacts with BCAS3. Interacts with LGSN. Interacts with SYNM. Interacts (via rod region) with PLEC (via CH 1 domain). Interacts with PLEC isoform 1C. Interacts with STK33. Interacts with LARP6. Interacts with RAB8B. Interacts with TOR1A; the interaction associates TOR1A with the cytoskeleton. Interacts with TOR1AIP1. Interacts with DIAPH1. Interacts with EPPK1; interaction is dependent of higher-order structure of intermediate filament. Interacts with the non-receptor tyrosine kinase SRMS; the interaction leads to phosphorylation of VIM. Interacts with NOD2. Interacts (via head region) with CORO1C. Interacts with HDGF. Interacts with PRKCE (via phorbol-ester/DAG-type 2 domain). Interacts with BFSP2. Interacts with PPL. Interacts with PKP1 and PKP2. Interacts with SCRIB (via PDZ domains); the interaction protects SCRIB from proteasomal degradation and facilitates SCRIB localization to intermediate filaments, the interaction is reduced by cell contact inhibition. Post-translationally, phosphorylation by PKN1 inhibits the formation of filaments. Filament disassembly during mitosis is promoted by phosphorylation at Ser-55 as well as by nestin. One of the most prominent phosphoproteins in various cells of mesenchymal origin. Phosphorylation is enhanced during cell division, at which time vimentin filaments are significantly reorganized. Phosphorylated at Ser-56 by CDK5 during neutrophil secretion in the cytoplasm. Phosphorylated by STK33. Phosphorylated on tyrosine residues by SRMS. S-nitrosylation is induced by interferon-gamma and oxidatively-modified low-densitity lipoprotein (LDL(ox)) possibly implicating the iNOS-S100A8/9 transnitrosylase complex. Detected in eye lens fiber cells (at protein level). Expressed in retinal lens epithelial cells (at protein level). Expressed in Langerhans cells in the epidermis (at protein level).

The protein resides in the cytoplasm. It localises to the cytoskeleton. Its subcellular location is the nucleus matrix. The protein localises to the cell membrane. Its function is as follows. Vimentins are class-III intermediate filaments found in various non-epithelial cells, especially mesenchymal cells. Vimentin is attached to the nucleus, endoplasmic reticulum, and mitochondria, either laterally or terminally. Plays a role in cell directional movement, orientation, cell sheet organization and Golgi complex polarization at the cell migration front. Protects SCRIB from proteasomal degradation and facilitates its localization to intermediate filaments in a cell contact-mediated manner. Functionally, involved with LARP6 in the stabilization of type I collagen mRNAs for CO1A1 and CO1A2. The polypeptide is Vimentin (Mus musculus (Mouse)).